Consider the following 25-residue polypeptide: CKGKGASCRRTSYDCCTGSCRLGRC.

Disulfide bonds link cysteine 1/cysteine 16, cysteine 8/cysteine 20, and cysteine 15/cysteine 25. Cysteine 25 bears the Cysteine amide mark.

The protein belongs to the conotoxin O1 superfamily. In terms of tissue distribution, expressed by the venom duct.

Its subcellular location is the secreted. Omega-conotoxins act at presynaptic membranes, they bind and block voltage-gated calcium channels. This toxin blocks N-type calcium channels (Cav2.2/CACNA1B). It shows a higher potency when Cav2.2/CACNA1B is only expressed with the ancillary subunit CACNB3 (IC(50)=0.1 nM) than on Cav2.2/CACNA1B expressed with the ancillary subunits CACNA2D1 and CACNB3 (IC(50)=19.9 nM). The Cav2.2/CACNA1B block by this toxin is voltage-independent, whereas the recovery from toxin block is voltage-dependent. There is a low recovery at physiological membrane potential and a high recovery with hyperpolarized potential. This indicates that the toxin has a higher affinity for Cav2.2/CACNA1B in the inactivated state. It is noteworthy that ancillary subunits beta modulate recovery from this toxin block. Cav2.2/CACNA1B expressed with the ancillary subunit CACNB2a (isoform 2a) almost recover completely from this toxin block, whereas an expression with CACNB3 exhibits relatively weak recovery. Inhibition by this toxin of excitatory synaptic transmission is reversible. In vivo, when tested on rat model of persistent pain, this toxin blocks chronic pain behavior. The polypeptide is Omega conotoxin-CVIF (Conus catus (Cat cone)).